The chain runs to 257 residues: Acetyl-coenzyme A carboxylase carboxyl transferase subunit beta 1 (257 aa).

Positions 1-257 (MNINDIFLKR…KMHVNTGGEA (257 aa)) constitute a CoA carboxyltransferase N-terminal domain.

Belongs to the AccD/PCCB family. As to quaternary structure, acetyl-CoA carboxylase is a heterohexamer composed of biotin carboxyl carrier protein (AccB), biotin carboxylase (AccC) and two subunits each of ACCase subunit alpha (AccA) and ACCase subunit beta (AccD).

The protein localises to the cytoplasm. The catalysed reaction is N(6)-carboxybiotinyl-L-lysyl-[protein] + acetyl-CoA = N(6)-biotinyl-L-lysyl-[protein] + malonyl-CoA. The protein operates within lipid metabolism; malonyl-CoA biosynthesis; malonyl-CoA from acetyl-CoA: step 1/1. In terms of biological role, component of the acetyl coenzyme A carboxylase (ACC) complex. Biotin carboxylase (BC) catalyzes the carboxylation of biotin on its carrier protein (BCCP) and then the CO(2) group is transferred by the transcarboxylase to acetyl-CoA to form malonyl-CoA. The chain is Acetyl-coenzyme A carboxylase carboxyl transferase subunit beta 1 from Lachnospira eligens (strain ATCC 27750 / DSM 3376 / VPI C15-48 / C15-B4) (Eubacterium eligens).